Consider the following 22-residue polypeptide: Motilin (22 aa).

Polar residues predominate over residues Phe-1 to Gln-11. Residues Phe-1 to Gln-22 are disordered. Positions Lys-12–Gln-22 are enriched in basic and acidic residues.

This sequence belongs to the motilin family.

It localises to the secreted. In terms of biological role, plays an important role in the regulation of interdigestive gastrointestinal motility and indirectly causes rhythmic contraction of duodenal and colonic smooth muscle. In Gallus gallus (Chicken), this protein is Motilin (MLN).